A 510-amino-acid polypeptide reads, in one-letter code: Bifunctional purine biosynthesis protein PurH (510 aa).

An MGS-like domain is found at 1–142 (MRALLSVSDK…KNYKDVMVLC (142 aa)).

It belongs to the PurH family.

The enzyme catalyses (6R)-10-formyltetrahydrofolate + 5-amino-1-(5-phospho-beta-D-ribosyl)imidazole-4-carboxamide = 5-formamido-1-(5-phospho-D-ribosyl)imidazole-4-carboxamide + (6S)-5,6,7,8-tetrahydrofolate. It carries out the reaction IMP + H2O = 5-formamido-1-(5-phospho-D-ribosyl)imidazole-4-carboxamide. It participates in purine metabolism; IMP biosynthesis via de novo pathway; 5-formamido-1-(5-phospho-D-ribosyl)imidazole-4-carboxamide from 5-amino-1-(5-phospho-D-ribosyl)imidazole-4-carboxamide (10-formyl THF route): step 1/1. It functions in the pathway purine metabolism; IMP biosynthesis via de novo pathway; IMP from 5-formamido-1-(5-phospho-D-ribosyl)imidazole-4-carboxamide: step 1/1. The polypeptide is Bifunctional purine biosynthesis protein PurH (Campylobacter jejuni subsp. jejuni serotype O:2 (strain ATCC 700819 / NCTC 11168)).